The chain runs to 647 residues: DNA mismatch repair protein MutL (647 aa).

Belongs to the DNA mismatch repair MutL/HexB family.

Its function is as follows. This protein is involved in the repair of mismatches in DNA. It is required for dam-dependent methyl-directed DNA mismatch repair. May act as a 'molecular matchmaker', a protein that promotes the formation of a stable complex between two or more DNA-binding proteins in an ATP-dependent manner without itself being part of a final effector complex. This Bacillus cereus (strain Q1) protein is DNA mismatch repair protein MutL.